The following is a 548-amino-acid chain: ATP synthase subunit alpha, mitochondrial (548 aa).

209–216 (GDRQTGKT) serves as a coordination point for ATP.

The protein belongs to the ATPase alpha/beta chains family. As to quaternary structure, F-type ATPases have 2 components, CF(1) - the catalytic core - and CF(0) - the membrane proton channel. CF(1) has five subunits: alpha(3), beta(3), gamma(1), delta(1), epsilon(1). CF(0) has three main subunits: a, b and c.

The protein localises to the mitochondrion. Its subcellular location is the mitochondrion inner membrane. Mitochondrial membrane ATP synthase (F(1)F(0) ATP synthase or Complex V) produces ATP from ADP in the presence of a proton gradient across the membrane which is generated by electron transport complexes of the respiratory chain. F-type ATPases consist of two structural domains, F(1) - containing the extramembraneous catalytic core, and F(0) - containing the membrane proton channel, linked together by a central stalk and a peripheral stalk. During catalysis, ATP synthesis in the catalytic domain of F(1) is coupled via a rotary mechanism of the central stalk subunits to proton translocation. Subunits alpha and beta form the catalytic core in F(1). Rotation of the central stalk against the surrounding alpha(3)beta(3) subunits leads to hydrolysis of ATP in three separate catalytic sites on the beta subunits. Subunit alpha does not bear the catalytic high-affinity ATP-binding sites. This is ATP synthase subunit alpha, mitochondrial (ATP1) from Kluyveromyces lactis (strain ATCC 8585 / CBS 2359 / DSM 70799 / NBRC 1267 / NRRL Y-1140 / WM37) (Yeast).